The sequence spans 250 residues: tRNA-specific adenosine deaminase subunit TAD2 (250 aa).

Residues 1 to 119 (MQHIKHMRTA…ERFGGNGTVL (119 aa)) form the CMP/dCMP-type deaminase domain. Histidine 54 provides a ligand contact to Zn(2+). Glutamate 56 serves as the catalytic Proton donor. Zn(2+)-binding residues include cysteine 88 and cysteine 91.

This sequence belongs to the cytidine and deoxycytidylate deaminase family. ADAT2 subfamily. Heterodimer with TAD3. Zn(2+) is required as a cofactor.

It is found in the cytoplasm. Its subcellular location is the nucleus. The enzyme catalyses adenosine(34) in tRNA + H2O + H(+) = inosine(34) in tRNA + NH4(+). Structural subunit of tRNA-specific adenosine deaminase, which deaminates adenosine-34 (the first, also called wobble position of the anticodon) to inosine in many tRNAs. Inosine-34 allows the decoding of 3 different nucleotides at the third position of mRNA codons, as inosine is able to pair with U, C, and A. This Saccharomyces cerevisiae (strain ATCC 204508 / S288c) (Baker's yeast) protein is tRNA-specific adenosine deaminase subunit TAD2 (TAD2).